Here is a 466-residue protein sequence, read N- to C-terminus: MDSSLQHSTTKILSTQESREALSNRLTMISGAKPLAFSIERIMSRTPEPKCLPVASLLQSSAPKGDQKPGLHINSSSIPRMIPFVPVAYEHCAKIGISGAELRKSHVDSSPPFSCSDLLNCALTLKGDFPREALPLQQYKLVRPRVVNHSSFHAMGAAFCYFNRGDSEWHPPASINIHPMASYFLGSPLHQAPKCYVAAERNKLLAPSVEKFPSGVTFKDLSQAQFQHYMKEGPRSLSDKITFKTSAKFSSASPSSKPKVFTCEVCGKVFNAHYNLTRHMPVHTGARPFVCKICGKGFRQASTLCRHKIIHTQEKPHKCNQCGKAFNRSSTLNTHTRIHAGYKPFVCEFCGKGFHQKGNYKNHKLTHSGEKQFKCNICNKAFHQIYNLTFHMHTHNDKKPFTCPTCGKGFCRNFDLKKHVRKLHDNSGSSAGTRGLGATGHQELHLPNREQSHTIIQSPQLQKSVY.

Residues Pro34–Pro49 carry the Engrailed homology 1 repressor motif. 6 C2H2-type zinc fingers span residues Phe261–His283, Phe289–His311, His317–His339, Phe345–His367, Phe373–His395, and Phe401–His424. Residues Leu446–Tyr466 form a disordered region. Residues His453–Tyr466 are compositionally biased toward polar residues.

This sequence belongs to the krueppel C2H2-type zinc-finger protein family.

The protein localises to the nucleus. In terms of biological role, transcription repressor. Involved in the development of the forebrain region. The protein is Fez family zinc finger protein 1 (fezf1) of Xenopus laevis (African clawed frog).